We begin with the raw amino-acid sequence, 344 residues long: Phenylalanine--tRNA ligase alpha subunit (344 aa).

Glu-255 contacts Mg(2+).

The protein belongs to the class-II aminoacyl-tRNA synthetase family. Phe-tRNA synthetase alpha subunit type 1 subfamily. As to quaternary structure, tetramer of two alpha and two beta subunits. The cofactor is Mg(2+).

Its subcellular location is the cytoplasm. It carries out the reaction tRNA(Phe) + L-phenylalanine + ATP = L-phenylalanyl-tRNA(Phe) + AMP + diphosphate + H(+). The protein is Phenylalanine--tRNA ligase alpha subunit of Phocaeicola vulgatus (strain ATCC 8482 / DSM 1447 / JCM 5826 / CCUG 4940 / NBRC 14291 / NCTC 11154) (Bacteroides vulgatus).